The chain runs to 209 residues: Guanylate kinase (209 aa).

In terms of domain architecture, Guanylate kinase-like spans 5-182 (GLLIVISGPS…AVTKINSIIV (178 aa)). Position 12 to 19 (12 to 19 (GPSGAGKG)) interacts with ATP.

It belongs to the guanylate kinase family.

Its subcellular location is the cytoplasm. It carries out the reaction GMP + ATP = GDP + ADP. In terms of biological role, essential for recycling GMP and indirectly, cGMP. The protein is Guanylate kinase of Clostridium acetobutylicum (strain ATCC 824 / DSM 792 / JCM 1419 / IAM 19013 / LMG 5710 / NBRC 13948 / NRRL B-527 / VKM B-1787 / 2291 / W).